Reading from the N-terminus, the 284-residue chain is 2-dehydro-3-deoxyphosphooctonate aldolase (284 aa).

It belongs to the KdsA family.

The protein localises to the cytoplasm. It catalyses the reaction D-arabinose 5-phosphate + phosphoenolpyruvate + H2O = 3-deoxy-alpha-D-manno-2-octulosonate-8-phosphate + phosphate. The protein operates within carbohydrate biosynthesis; 3-deoxy-D-manno-octulosonate biosynthesis; 3-deoxy-D-manno-octulosonate from D-ribulose 5-phosphate: step 2/3. It functions in the pathway bacterial outer membrane biogenesis; lipopolysaccharide biosynthesis. The protein is 2-dehydro-3-deoxyphosphooctonate aldolase of Salmonella enteritidis PT4 (strain P125109).